We begin with the raw amino-acid sequence, 140 residues long: Large ribosomal subunit protein uL14x/uL14z/uL14y (140 aa).

This sequence belongs to the universal ribosomal protein uL14 family.

The sequence is that of Large ribosomal subunit protein uL14x/uL14z/uL14y (RPL23A) from Arabidopsis thaliana (Mouse-ear cress).